Reading from the N-terminus, the 227-residue chain is Cytidylate kinase (227 aa).

Residue 12–20 (GPSGAGKGT) participates in ATP binding.

It belongs to the cytidylate kinase family. Type 1 subfamily.

Its subcellular location is the cytoplasm. The catalysed reaction is CMP + ATP = CDP + ADP. It catalyses the reaction dCMP + ATP = dCDP + ADP. The protein is Cytidylate kinase of Shigella flexneri.